Here is a 327-residue protein sequence, read N- to C-terminus: Phenylalanine--tRNA ligase alpha subunit (327 aa).

Glutamate 252 is a binding site for Mg(2+).

Belongs to the class-II aminoacyl-tRNA synthetase family. Phe-tRNA synthetase alpha subunit type 1 subfamily. In terms of assembly, tetramer of two alpha and two beta subunits. Mg(2+) is required as a cofactor.

It is found in the cytoplasm. The enzyme catalyses tRNA(Phe) + L-phenylalanine + ATP = L-phenylalanyl-tRNA(Phe) + AMP + diphosphate + H(+). In Sodalis glossinidius (strain morsitans), this protein is Phenylalanine--tRNA ligase alpha subunit.